The following is a 431-amino-acid chain: MFMSQIVDIRAREILDSRGNPTIEADVILESGVVGRACAPSGASTGSREALELRDGDKSRYLGKGVRTAVQNVNSSIHELLVGQSVFEQKALDEKMIAFDGTENKSKLGANATLAVSLAAAHAAAAEQKLPLFQYIANLRGQTTLTMPVPMMNILNGGAHADNTVDIQEFMIEPVGFTSFAEALRAGAEVFHSLKSVLKKQGLNTAVGDEGGFAPNLRSNEEAITVILQAIEQTGYKAGSDIMLALDCASSEFYKNGQYILEGEGNKSFTSNQFADYLAGLVKQYPIISIEDGLDESDWEGWSYLTSILGDKIQLVGDDLFVTNPKILQRGIDEKVGNSILIKYNQIGTLTETLDAIYLAKANGYTTVISHRSGETEDSTIADLAVGTAAGQIKTGSLCRSDRVSKYNQLLRIEELTKAVYRGKAEFKGLK.

(2R)-2-phosphoglycerate is bound at residue Gln168. The active-site Proton donor is the Glu210. Mg(2+) contacts are provided by Asp247, Glu291, and Asp318. 4 residues coordinate (2R)-2-phosphoglycerate: Lys343, Arg372, Ser373, and Lys394. The active-site Proton acceptor is the Lys343.

It belongs to the enolase family. As to quaternary structure, component of the RNA degradosome, a multiprotein complex involved in RNA processing and mRNA degradation. Requires Mg(2+) as cofactor.

Its subcellular location is the cytoplasm. It localises to the secreted. The protein resides in the cell surface. It catalyses the reaction (2R)-2-phosphoglycerate = phosphoenolpyruvate + H2O. It participates in carbohydrate degradation; glycolysis; pyruvate from D-glyceraldehyde 3-phosphate: step 4/5. In terms of biological role, catalyzes the reversible conversion of 2-phosphoglycerate (2-PG) into phosphoenolpyruvate (PEP). It is essential for the degradation of carbohydrates via glycolysis. The protein is Enolase of Acinetobacter baumannii (strain SDF).